Here is a 514-residue protein sequence, read N- to C-terminus: Bifunctional purine biosynthesis protein PurH (514 aa).

One can recognise an MGS-like domain in the interval 1–146 (MPPLALLSTS…KNFAHVTVLC (146 aa)).

It belongs to the PurH family.

The catalysed reaction is (6R)-10-formyltetrahydrofolate + 5-amino-1-(5-phospho-beta-D-ribosyl)imidazole-4-carboxamide = 5-formamido-1-(5-phospho-D-ribosyl)imidazole-4-carboxamide + (6S)-5,6,7,8-tetrahydrofolate. It carries out the reaction IMP + H2O = 5-formamido-1-(5-phospho-D-ribosyl)imidazole-4-carboxamide. The protein operates within purine metabolism; IMP biosynthesis via de novo pathway; 5-formamido-1-(5-phospho-D-ribosyl)imidazole-4-carboxamide from 5-amino-1-(5-phospho-D-ribosyl)imidazole-4-carboxamide (10-formyl THF route): step 1/1. It participates in purine metabolism; IMP biosynthesis via de novo pathway; IMP from 5-formamido-1-(5-phospho-D-ribosyl)imidazole-4-carboxamide: step 1/1. In Cyanothece sp. (strain PCC 7425 / ATCC 29141), this protein is Bifunctional purine biosynthesis protein PurH.